Consider the following 434-residue polypeptide: uncharacterized protein (434 aa).

Positions 1–17 (MTFLLFQLLVLLRYSIG) are cleaved as a signal peptide. Transmembrane regions (helical) follow at residues 48-68 (AAIS…FTVL), 70-90 (EWVY…SVTA), 112-132 (YRVA…FTIF), 141-161 (TYGT…NAVV), 173-193 (WITG…RLVT), 206-226 (YGVH…TSFV), 232-252 (YCGL…LSGL), 271-291 (EGVY…HLGY), 305-325 (TSSI…TILF), 344-364 (WVLA…YIPL), 380-400 (ATFL…DTIF), and 404-424 (FSSL…IGTI).

The protein localises to the membrane. This is an uncharacterized protein from Arabidopsis thaliana (Mouse-ear cress).